A 660-amino-acid chain; its full sequence is Acyl-coenzyme A oxidase acox-1.3 (660 aa).

FAD is bound by residues 146 to 149 (YAQT), 154 to 155 (GT), and Gly188. Residues 282 to 285 (KIGY) and Arg292 each bind substrate. Residues Arg317 and 337–340 (QQHR) each bind FAD. The ATP site is built by His339, Ser389, His393, and Gln401. A substrate-binding site is contributed by 430–431 (YE). The active-site Proton acceptor is the Glu431. Glu433 serves as a coordination point for FAD. Residues 524–527 (RASR) and Tyr572 each bind ATP. The short motif at 658–660 (AKL) is the Microbody targeting signal element.

This sequence belongs to the acyl-CoA oxidase family. In terms of assembly, forms a heterodimer with acox-1.1; the interaction may be important for the stability of acox-1.3. Requires FAD as cofactor.

Its subcellular location is the peroxisome. The enzyme catalyses asc-C7-CoA + O2 = asc-DeltaC7-CoA + H2O2. It functions in the pathway lipid metabolism; peroxisomal fatty acid beta-oxidation. Activated by ATP. ATP binding leads to a conformational change that promotes FAD cofactor binding and enzyme activity. ATP binding likely occurs during acox-1.3 folding and/or dimer formation. In terms of biological role, involved in the first step of peroxisomal beta-oxidation by catalyzing the desaturation of fatty acid-derived side chains of ascaroside pheromones, which regulates development and behavior. Specifically, shortens ascarosides with a 7-carbon side chain (asc-C7). Does not catalyze the desaturation of fatty acids or hydroxylated fatty acids. Involved in the biosynthesis of asc-C6-MK (daumone 2) and asc-delta-C9 (daumone 3) but not asc-C7 (daumone 1); daumones are pheromones produced during unfavourable growth conditions which promote entry into the dauer stage. In Caenorhabditis elegans, this protein is Acyl-coenzyme A oxidase acox-1.3.